The primary structure comprises 187 residues: Protein dj-1beta (187 aa).

The residue at position 45 (Cys45) is a Cysteine sulfinic acid (-SO2H). The active-site Nucleophile is Cys104. Residue Cys104 is modified to Cysteine sulfinic acid (-SO2H); alternate.

In terms of processing, oxidation of Cys-45 and Cys-104 in response to oxidative stress. Levels of oxidation increase with age. As to expression, expressed in the head and testis (at protein level). Ubiquitously expressed at constant levels.

The protein resides in the mitochondrion. It is found in the cytoplasm. The protein localises to the nucleus. Plays an important role in cell protection against oxidative stress and cell death by acting as a oxidative stress sensor. Does not play a role in methylglyoxal detoxification. Plays a role in mitochondrial function together with Pink1. In motor neurons regulates structural synaptic plasticity of locomotor behavior as part of the PTEN-phosphatidylinositol 3-kinase pathway in response to oxygen species (ROS) levels. In Drosophila melanogaster (Fruit fly), this protein is Protein dj-1beta.